The sequence spans 252 residues: MTIESVPRSGFGYFIFGIKIALSPSIRKFVLLPLIANVLLVGGALFYIFSNLNTWIEGWIGALPSFLSWLSYILWPLLVLTVLATFSYFFSTLANFIAAPFNGLLAEKVEELLSGKKVNDDGLLDVLKDTPRILAREWRKLVYILPKAIGLFLLLLIPALGQTVAPFLWFIFTAWMLAIQYADYPFDNHKIKFDDMRNNLKQKQGKSYSFGALVSVFTTIPVLNLIVMPVAVCGATAMWVAEFKDQALRSRL.

Transmembrane regions (helical) follow at residues 29-49 (FVLLPLIANVLLVGGALFYIF), 66-86 (FLSWLSYILWPLLVLTVLATF), 141-160 (LVYILPKAIGLFLLLLIPAL), 164-186 (VAPFLWFIFTAWMLAIQYADYPF), and 212-232 (ALVSVFTTIPVLNLIVMPVAV).

It belongs to the CysZ family.

The protein localises to the cell inner membrane. Its function is as follows. High affinity, high specificity proton-dependent sulfate transporter, which mediates sulfate uptake. Provides the sulfur source for the cysteine synthesis pathway. The protein is Sulfate transporter CysZ of Vibrio atlanticus (strain LGP32) (Vibrio splendidus (strain Mel32)).